The primary structure comprises 375 residues: Flagellar P-ring protein (375 aa).

The signal sequence occupies residues 1–23 (MFNQSFLKYMLFGFFLFSFHAHA).

The protein belongs to the FlgI family. In terms of assembly, the basal body constitutes a major portion of the flagellar organelle and consists of four rings (L,P,S, and M) mounted on a central rod.

The protein resides in the bacterial flagellum basal body. Its function is as follows. Assembles around the rod to form the L-ring and probably protects the motor/basal body from shearing forces during rotation. In Buchnera aphidicola subsp. Baizongia pistaciae (strain Bp), this protein is Flagellar P-ring protein.